The sequence spans 165 residues: Small ribosomal subunit protein bS16 (165 aa).

Positions Trp-84–Gly-165 are disordered. The segment covering Asn-89–Ala-130 has biased composition (basic and acidic residues). Low complexity predominate over residues Ala-131 to Ala-157.

The protein belongs to the bacterial ribosomal protein bS16 family.

In Caulobacter vibrioides (strain ATCC 19089 / CIP 103742 / CB 15) (Caulobacter crescentus), this protein is Small ribosomal subunit protein bS16.